Consider the following 429-residue polypeptide: Gamma-glutamyl phosphate reductase (429 aa).

The protein belongs to the gamma-glutamyl phosphate reductase family.

It is found in the cytoplasm. The enzyme catalyses L-glutamate 5-semialdehyde + phosphate + NADP(+) = L-glutamyl 5-phosphate + NADPH + H(+). It functions in the pathway amino-acid biosynthesis; L-proline biosynthesis; L-glutamate 5-semialdehyde from L-glutamate: step 2/2. Catalyzes the NADPH-dependent reduction of L-glutamate 5-phosphate into L-glutamate 5-semialdehyde and phosphate. The product spontaneously undergoes cyclization to form 1-pyrroline-5-carboxylate. In Rhizorhabdus wittichii (strain DSM 6014 / CCUG 31198 / JCM 15750 / NBRC 105917 / EY 4224 / RW1) (Sphingomonas wittichii), this protein is Gamma-glutamyl phosphate reductase.